The following is a 294-amino-acid chain: ATP phosphoribosyltransferase (294 aa).

Belongs to the ATP phosphoribosyltransferase family. Long subfamily. Mg(2+) is required as a cofactor.

It localises to the cytoplasm. The catalysed reaction is 1-(5-phospho-beta-D-ribosyl)-ATP + diphosphate = 5-phospho-alpha-D-ribose 1-diphosphate + ATP. It participates in amino-acid biosynthesis; L-histidine biosynthesis; L-histidine from 5-phospho-alpha-D-ribose 1-diphosphate: step 1/9. Its activity is regulated as follows. Feedback inhibited by histidine. Its function is as follows. Catalyzes the condensation of ATP and 5-phosphoribose 1-diphosphate to form N'-(5'-phosphoribosyl)-ATP (PR-ATP). Has a crucial role in the pathway because the rate of histidine biosynthesis seems to be controlled primarily by regulation of HisG enzymatic activity. The protein is ATP phosphoribosyltransferase of Chlorobaculum parvum (strain DSM 263 / NCIMB 8327) (Chlorobium vibrioforme subsp. thiosulfatophilum).